The chain runs to 633 residues: UvrABC system protein C (633 aa).

Residues 21–100 (TDPGVYKFLD…IKELQPRYNV (80 aa)) enclose the GIY-YIG domain. A UVR domain is found at 214–249 (QELMDLLKDEMQRQSDAHNFEEAARLRDQVKALKDY).

Belongs to the UvrC family. As to quaternary structure, interacts with UvrB in an incision complex.

It localises to the cytoplasm. In terms of biological role, the UvrABC repair system catalyzes the recognition and processing of DNA lesions. UvrC both incises the 5' and 3' sides of the lesion. The N-terminal half is responsible for the 3' incision and the C-terminal half is responsible for the 5' incision. This is UvrABC system protein C from Salinibacter ruber (strain DSM 13855 / M31).